A 158-amino-acid polypeptide reads, in one-letter code: uncharacterized protein (158 aa).

The protein belongs to the SixA phosphatase family.

This is an uncharacterized protein from Mycobacterium tuberculosis (strain CDC 1551 / Oshkosh).